A 449-amino-acid chain; its full sequence is Putative F-box/LRR-repeat protein At3g44090 (449 aa).

An F-box domain is found at 23–77 (LASMDCLPDDLLVQILYFLPTKEAISTSLLSKRWRTLYSLVHNLDLDDYIFWHHE). 6 LRR repeats span residues 133–163 (YYNLQKDSLWQFGFPYKVFTSTKLVKLSLGT), 186–212 (YIWFEDNQLSDVFLAACPALEDLTIHH), 214–231 (FRPFLISSKNLKKLSVTI), 247–278 (TPNVVDLYYSDFPRPIAPHCHLDSLAKVELDL), 286–311 (RQVQNDADVKNLISEIRNVKTLHLTY), and 320–345 (SKKRDWKVLPLLLERSPNLKTLVLSG).

This chain is Putative F-box/LRR-repeat protein At3g44090, found in Arabidopsis thaliana (Mouse-ear cress).